The chain runs to 658 residues: Probable Xaa-Pro aminopeptidase P (658 aa).

Positions 449, 460, 558, and 572 each coordinate Mn(2+).

The protein belongs to the peptidase M24B family. Mn(2+) is required as a cofactor.

The catalysed reaction is Release of any N-terminal amino acid, including proline, that is linked to proline, even from a dipeptide or tripeptide.. Functionally, catalyzes the removal of a penultimate prolyl residue from the N-termini of peptides. The protein is Probable Xaa-Pro aminopeptidase P (ampp) of Aspergillus clavatus (strain ATCC 1007 / CBS 513.65 / DSM 816 / NCTC 3887 / NRRL 1 / QM 1276 / 107).